The sequence spans 327 residues: MKKNRMMIMICSVGVVWMLLVGGSYGEQCGRQAGGALCPGGNCCSQFGWCGSTTDYCGKDCQSQCGGPSPAPTDLSALISRSTFDQVLKHRNDGACPAKGFYTYDAFIAAAKAYPSFGNTGDTATRKREIAAFLGQTSHETTGGWATAPDGPYAWGYCFVRERNPSAYCSATPQFPCAPGQQYYGRGPIQISWNYNYGQCGRAIGVDLLNKPDLVATDSVISFKSALWFWMTAQSPKPSSHDVITSRWTPSSADVAARRLPGYGTVTNIINGGLECGRGQDSRVQDRIGFFKRYCDLLGVGYGNNLDCYSQTPFGNSLFLSDLVTSQ.

A signal peptide spans 1–26 (MKKNRMMIMICSVGVVWMLLVGGSYG). Residues 27 to 67 (EQCGRQAGGALCPGGNCCSQFGWCGSTTDYCGKDCQSQCGG) enclose the Chitin-binding type-1 domain. 7 disulfides stabilise this stretch: cysteine 29–cysteine 44, cysteine 38–cysteine 50, cysteine 43–cysteine 57, cysteine 61–cysteine 65, cysteine 96–cysteine 158, cysteine 169–cysteine 177, and cysteine 276–cysteine 308. Catalysis depends on glutamate 140, which acts as the Proton donor. Residues 317 to 327 (SLFLSDLVTSQ) constitute a propeptide, removed in mature form.

Belongs to the glycosyl hydrolase 19 family. Chitinase class I subfamily.

The protein resides in the vacuole. The catalysed reaction is Random endo-hydrolysis of N-acetyl-beta-D-glucosaminide (1-&gt;4)-beta-linkages in chitin and chitodextrins.. Defense against chitin-containing fungal pathogens. The sequence is that of Endochitinase CH5B from Phaseolus vulgaris (Kidney bean).